The following is a 122-amino-acid chain: Prefoldin subunit 1 (122 aa).

An N-acetylalanine modification is found at Ala-2.

It belongs to the prefoldin subunit beta family. As to quaternary structure, heterohexamer of two PFD-alpha type and four PFD-beta type subunits.

Binds specifically to cytosolic chaperonin (c-CPN) and transfers target proteins to it. Binds to nascent polypeptide chain and promotes folding in an environment in which there are many competing pathways for nonnative proteins. The chain is Prefoldin subunit 1 (PFDN1) from Pongo abelii (Sumatran orangutan).